A 321-amino-acid polypeptide reads, in one-letter code: Cytochrome f (321 aa).

The first 38 residues, 1–38 (MKKNFYTISKTMSRSLKLILFSVFIGFSIFLIPQPTWA), serve as a signal peptide directing secretion. Heme contacts are provided by Y39, C59, C62, and H63. Residues 288-308 (VIGMIIFFIGVGLSQIMLVLK) traverse the membrane as a helical segment.

The protein belongs to the cytochrome f family. As to quaternary structure, the 4 large subunits of the cytochrome b6-f complex are cytochrome b6, subunit IV (17 kDa polypeptide, PetD), cytochrome f and the Rieske protein, while the 4 small subunits are PetG, PetL, PetM and PetN. The complex functions as a dimer. The cofactor is heme.

The protein localises to the cellular thylakoid membrane. Component of the cytochrome b6-f complex, which mediates electron transfer between photosystem II (PSII) and photosystem I (PSI), cyclic electron flow around PSI, and state transitions. The polypeptide is Cytochrome f (Prochlorococcus marinus (strain NATL1A)).